Consider the following 396-residue polypeptide: Protein PIN-LIKES 5 (396 aa).

Topologically, residues 1 to 5 are lumenal; the sequence is MGFWS. A helical membrane pass occupies residues 6–26; it reads LLEVASMPVIQVLFMSLVGAF. The Cytoplasmic portion of the chain corresponds to 27 to 45; the sequence is MASDRCKLFPVEARNSMNK. A helical transmembrane segment spans residues 46–66; the sequence is VVFVLFAPALMFANLAQTVTL. Over 67 to 73 the chain is Lumenal; it reads EDIISWW. Residues 74–94 form a helical membrane-spanning segment; that stretch reads FMPVNMGLTFLIGGLLGWLVV. The Cytoplasmic segment spans residues 95-106; it reads KILKPPPYLEGL. A helical transmembrane segment spans residues 107-127; it reads IVATCSAGNMGNLPIILVPAI. The Lumenal segment spans residues 128-144; that stretch reads CDEDKSPFGNRSVCRTV. Residues 145–165 form a helical membrane-spanning segment; that stretch reads GLSYASFSMALGGFYIWTYTF. At 166-229 the chain is on the cytoplasmic side; sequence RLIKGSAMKV…WRKGVDFLHE (64 aa). A helical transmembrane segment spans residues 230-250; sequence ILEELLAPPTLGAIIGFIFGA. Residues 251 to 273 lie on the Lumenal side of the membrane; it reads VRWLRNLIIGDDAPLRIVQSTAK. A helical transmembrane segment spans residues 274-294; it reads LLGDGTIPCMTIILGGNLIQG. The Cytoplasmic segment spans residues 295 to 312; it reads LRSSAVKPMVVLGIVCVR. A helical transmembrane segment spans residues 313 to 333; it reads YIAMPIIGIGIVLTAANLGFL. The Lumenal portion of the chain corresponds to 334 to 337; the sequence is PADP. The helical transmembrane segment at 338–358 threads the bilayer; the sequence is LFQYVLMLQFTLPPAMNIGTM. The Cytoplasmic segment spans residues 359–370; that stretch reads TQLYNVAQDECS. Residues 371–391 traverse the membrane as a helical segment; sequence VLMLWTYLVAILALTVWSTIF. The Lumenal segment spans residues 392-396; sequence LHLLV.

The protein belongs to the auxin efflux carrier (TC 2.A.69.2) family. In terms of tissue distribution, expressed in seedlings, cauline leaves and flowers.

Its subcellular location is the endoplasmic reticulum membrane. Its function is as follows. Involved in cellular auxin homeostasis by regulating auxin metabolism. Regulates intracellular auxin accumulation at the endoplasmic reticulum and thus auxin availability for nuclear auxin signaling. The sequence is that of Protein PIN-LIKES 5 from Arabidopsis thaliana (Mouse-ear cress).